The chain runs to 80 residues: Large ribosomal subunit protein eL14 (80 aa).

This sequence belongs to the eukaryotic ribosomal protein eL14 family.

This chain is Large ribosomal subunit protein eL14, found in Methanocaldococcus jannaschii (strain ATCC 43067 / DSM 2661 / JAL-1 / JCM 10045 / NBRC 100440) (Methanococcus jannaschii).